We begin with the raw amino-acid sequence, 649 residues long: Endoplasmic reticulum chaperone BiP (649 aa).

Residues 1–20 (MGLSTYVGTFLLCILTLSHC) form the signal peptide. Residues 36-39 (GTTY), lysine 96, 226-228 (GGT), 292-299 (EKAKRTLS), and 363-366 (GSTR) each bind ATP. A nucleotide-binding (NBD) region spans residues 125-279 (KPYMKVQVGS…KKKEGKDITK (155 aa)). Residues 399–499 (VQAGVISGVE…PRGLPQIEVT (101 aa)) form a substrate-binding (SBD) region. The short motif at 646 to 649 (KEEL) is the Prevents secretion from ER element.

This sequence belongs to the heat shock protein 70 family.

It is found in the endoplasmic reticulum lumen. The enzyme catalyses ATP + H2O = ADP + phosphate + H(+). Its activity is regulated as follows. The chaperone activity is regulated by ATP-induced allosteric coupling of the nucleotide-binding (NBD) and substrate-binding (SBD) domains. In the ADP-bound and nucleotide-free (apo) states, the two domains have little interaction. In contrast, in the ATP-bound state the two domains are tightly coupled, which results in drastically accelerated kinetics in both binding and release of polypeptide substrates. J domain-containing co-chaperones stimulate the ATPase activity and are required for efficient substrate recognition. In terms of biological role, endoplasmic reticulum chaperone that plays a key role in protein folding and quality control in the endoplasmic reticulum lumen. Involved in the correct folding of proteins and degradation of misfolded proteins. Acts as a key repressor of the unfolded protein response (UPR). This chain is Endoplasmic reticulum chaperone BiP, found in Echinococcus multilocularis (Fox tapeworm).